The sequence spans 284 residues: D-tagatose-1,6-bisphosphate aldolase subunit GatY (284 aa).

D82 serves as the catalytic Proton donor. Zn(2+) contacts are provided by H83 and H180. G181 serves as a coordination point for dihydroxyacetone phosphate. A Zn(2+)-binding site is contributed by H208. Dihydroxyacetone phosphate-binding positions include 209–211 (GAS) and 230–233 (NVAT).

It belongs to the class II fructose-bisphosphate aldolase family. TagBP aldolase GatY subfamily. In terms of assembly, forms a complex with GatZ. The cofactor is Zn(2+).

The catalysed reaction is D-tagatofuranose 1,6-bisphosphate = D-glyceraldehyde 3-phosphate + dihydroxyacetone phosphate. Its pathway is carbohydrate metabolism; D-tagatose 6-phosphate degradation; D-glyceraldehyde 3-phosphate and glycerone phosphate from D-tagatose 6-phosphate: step 2/2. Functionally, catalytic subunit of the tagatose-1,6-bisphosphate aldolase GatYZ, which catalyzes the reversible aldol condensation of dihydroxyacetone phosphate (DHAP or glycerone-phosphate) with glyceraldehyde 3-phosphate (G3P) to produce tagatose 1,6-bisphosphate (TBP). Requires GatZ subunit for full activity and stability. Is involved in the catabolism of galactitol. The sequence is that of D-tagatose-1,6-bisphosphate aldolase subunit GatY from Klebsiella pneumoniae subsp. pneumoniae (strain ATCC 700721 / MGH 78578).